A 357-amino-acid polypeptide reads, in one-letter code: DNA replication and repair protein RecF (357 aa).

30 to 37 (GANGSGKT) lines the ATP pocket.

This sequence belongs to the RecF family.

The protein resides in the cytoplasm. Functionally, the RecF protein is involved in DNA metabolism; it is required for DNA replication and normal SOS inducibility. RecF binds preferentially to single-stranded, linear DNA. It also seems to bind ATP. The polypeptide is DNA replication and repair protein RecF (Escherichia coli O6:K15:H31 (strain 536 / UPEC)).